The sequence spans 550 residues: Coiled-coil domain-containing protein 102A (550 aa).

Disordered stretches follow at residues 1–69 (MSHG…DGDW) and 138–247 (GARR…ATEE). S12, S26, and S28 each carry phosphoserine. Positions 37-61 (SLPPTPPSGTPSPGPPPALPLPPAP) are enriched in pro residues. A coiled-coil region spans residues 72–161 (REELRLRELE…ARGRELARLR (90 aa)). 2 stretches are compositionally biased toward basic and acidic residues: residues 138-159 (GARR…ELAR) and 169-188 (QTRD…DVGS). Coiled-coil stretches lie at residues 263 to 396 (QKVL…RRQT) and 427 to 518 (KLKK…NAPL). Disordered stretches follow at residues 472 to 497 (DELD…QSEN) and 509 to 550 (LRRQ…IQVA). The span at 530 to 550 (EEAEDGTSDLDEDEDLQIQVA) shows a compositional bias: acidic residues. S537 carries the phosphoserine modification.

The polypeptide is Coiled-coil domain-containing protein 102A (CCDC102A) (Homo sapiens (Human)).